Here is a 164-residue protein sequence, read N- to C-terminus: Low molecular weight protein-tyrosine-phosphatase (164 aa).

The Nucleophile role is filled by Cys9. Arg15 is an active-site residue. The active-site Proton donor is Asp128.

The protein belongs to the low molecular weight phosphotyrosine protein phosphatase family.

It catalyses the reaction O-phospho-L-tyrosyl-[protein] + H2O = L-tyrosyl-[protein] + phosphate. In terms of biological role, acts on tyrosine phosphorylated proteins, low-MW aryl phosphates and natural and synthetic acyl phosphates. May be involved in the regulation of sulfur amino acid metabolism. This is Low molecular weight protein-tyrosine-phosphatase (ptpA) from Streptomyces coelicolor (strain ATCC BAA-471 / A3(2) / M145).